Reading from the N-terminus, the 328-residue chain is G2/mitotic-specific cyclin-2 (328 aa).

The protein belongs to the cyclin family. Cyclin AB subfamily. Interacts with the CDC2 protein kinase to form a serine/threonine kinase holoenzyme complex also known as maturation promoting factor (MPF). The cyclin subunit imparts substrate specificity to the complex. Only expressed in organs with dividing cells.

Functionally, essential for the control of the cell cycle at the G2/M (mitosis) transition. The chain is G2/mitotic-specific cyclin-2 from Medicago sativa (Alfalfa).